Consider the following 392-residue polypeptide: 2'-deamino-2'-hydroxyneamine transaminase (392 aa).

Lysine 249 is modified (N6-(pyridoxal phosphate)lysine).

The protein belongs to the class-III pyridoxal-phosphate-dependent aminotransferase family. Pyridoxal 5'-phosphate serves as cofactor.

It carries out the reaction neamine + 2-oxoglutarate = 6'-oxoparomamine + L-glutamate. The catalysed reaction is 2'-deamino-2'-hydroxyneamine + 2-oxoglutarate = 2'-deamino-2'-hydroxy-6'-dehydroparomamine + L-glutamate. It functions in the pathway antibiotic biosynthesis; kanamycin biosynthesis. In terms of biological role, aminotransferase that has 6'-oxoglucosaminyl:L-glutamate aminotransferase activity by catalyzing pyridoxal-5'-phosphate-mediated transamination leading to the conversion of paromamine to neamine in the biosynthetic pathway of kanamycin B. The sequence is that of 2'-deamino-2'-hydroxyneamine transaminase (kacL) from Streptomyces kanamyceticus.